The primary structure comprises 429 residues: Nicotinate phosphoribosyltransferase (429 aa).

Residues Y15, F177, and T229 each contribute to the nicotinate site. Residue H232 is modified to Phosphohistidine; by autocatalysis. R294 lines the nicotinate pocket. T355 contacts 5-phospho-alpha-D-ribose 1-diphosphate.

Belongs to the NAPRTase family. In terms of processing, transiently phosphorylated on a His residue during the reaction cycle. Phosphorylation strongly increases the affinity for substrates and increases the rate of nicotinate D-ribonucleotide production. Dephosphorylation regenerates the low-affinity form of the enzyme, leading to product release.

Its subcellular location is the cytoplasm. It is found in the nucleus. The catalysed reaction is nicotinate + 5-phospho-alpha-D-ribose 1-diphosphate + ATP + H2O = nicotinate beta-D-ribonucleotide + ADP + phosphate + diphosphate. Its pathway is cofactor biosynthesis; NAD(+) biosynthesis; nicotinate D-ribonucleotide from nicotinate: step 1/1. Functionally, catalyzes the first step in the biosynthesis of NAD from nicotinic acid, the ATP-dependent synthesis of beta-nicotinate D-ribonucleotide from nicotinate and 5-phospho-D-ribose 1-phosphate. Essential for growth under anaerobic conditions. The chain is Nicotinate phosphoribosyltransferase (NPT1) from Saccharomyces cerevisiae (strain ATCC 204508 / S288c) (Baker's yeast).